Here is a 267-residue protein sequence, read N- to C-terminus: D-aminoacyl-tRNA deacylase (267 aa).

It belongs to the DtdA deacylase family. Monomer. Requires Zn(2+) as cofactor.

The enzyme catalyses a D-aminoacyl-tRNA + H2O = a tRNA + a D-alpha-amino acid + H(+). It catalyses the reaction glycyl-tRNA(Ala) + H2O = tRNA(Ala) + glycine + H(+). Functionally, D-aminoacyl-tRNA deacylase with broad substrate specificity. By recycling D-aminoacyl-tRNA to D-amino acids and free tRNA molecules, this enzyme counteracts the toxicity associated with the formation of D-aminoacyl-tRNA entities in vivo. This Methanothrix thermoacetophila (strain DSM 6194 / JCM 14653 / NBRC 101360 / PT) (Methanosaeta thermophila) protein is D-aminoacyl-tRNA deacylase.